The primary structure comprises 129 residues: Putative CC-type chemokine FPV061 (129 aa).

This sequence belongs to the intercrine beta (chemokine CC) family. Highly divergent.

The protein is Putative CC-type chemokine FPV061 of Fowlpox virus (strain NVSL) (FPV).